Here is a 376-residue protein sequence, read N- to C-terminus: Quinolinate synthase (376 aa).

His-57 and Ser-78 together coordinate iminosuccinate. Cys-123 lines the [4Fe-4S] cluster pocket. Iminosuccinate contacts are provided by residues 149 to 151 and Ser-166; that span reads YAN. Cys-210 contacts [4Fe-4S] cluster. Residues 236 to 238 and Thr-253 contribute to the iminosuccinate site; that span reads HPE. Residue Cys-307 participates in [4Fe-4S] cluster binding.

The protein belongs to the quinolinate synthase family. Type 1 subfamily. [4Fe-4S] cluster is required as a cofactor.

It localises to the cytoplasm. It catalyses the reaction iminosuccinate + dihydroxyacetone phosphate = quinolinate + phosphate + 2 H2O + H(+). It participates in cofactor biosynthesis; NAD(+) biosynthesis; quinolinate from iminoaspartate: step 1/1. Catalyzes the condensation of iminoaspartate with dihydroxyacetone phosphate to form quinolinate. This is Quinolinate synthase from Paraburkholderia phymatum (strain DSM 17167 / CIP 108236 / LMG 21445 / STM815) (Burkholderia phymatum).